The chain runs to 492 residues: Proline--tRNA ligase (492 aa).

This sequence belongs to the class-II aminoacyl-tRNA synthetase family. ProS type 3 subfamily. As to quaternary structure, homodimer.

The protein localises to the cytoplasm. It catalyses the reaction tRNA(Pro) + L-proline + ATP = L-prolyl-tRNA(Pro) + AMP + diphosphate. Its function is as follows. Catalyzes the attachment of proline to tRNA(Pro) in a two-step reaction: proline is first activated by ATP to form Pro-AMP and then transferred to the acceptor end of tRNA(Pro). In Christiangramia forsetii (strain DSM 17595 / CGMCC 1.15422 / KT0803) (Gramella forsetii), this protein is Proline--tRNA ligase.